Here is a 424-residue protein sequence, read N- to C-terminus: MKLEMICTGEEVLAGQIVDTNAAWFANTMMDQGIECQRRVTVGDRLEDLISVFRERSLEADIILVNGGLGPTSDDLSTEAMALAKGETLVENSIWRQRLEDWFARSGRVMAESNLKQALLPESAIMIDNPVGTACGFAVKFNRAWLFFTPGVPFEFKQMVHEQFIPFVKQRFDVSGDVALRKYLTLGQGESSLADTLDKIELPEGMTIGYRSSMPHIEIKLFARGIGAIDQLDTIETQIRLLLGNAIVADNKMSLAEEIHALLVDSDLSLSVAESCTGGMIVSQLISFSGSSSYLHQGLVTYCNESKVKVLGVKPETLDVHGAVSIATVEEMAKGARAILDSDFGLATSGIAGPTGGTDNKPVGTVAIALATKEGVYSQMIKLPRRSRDLVRSLSTAVAFDMLRRELLGQAVIVDYGSIGRFEK.

This sequence belongs to the CinA family.

The polypeptide is CinA-like protein (Shewanella halifaxensis (strain HAW-EB4)).